Consider the following 326-residue polypeptide: Beta-ketoacyl-[acyl-carrier-protein] synthase III 2 (326 aa).

Active-site residues include cysteine 114 and histidine 251. The ACP-binding stretch occupies residues 252 to 256; sequence SANAR. Residue asparagine 281 is part of the active site.

Belongs to the thiolase-like superfamily. FabH family. Homodimer.

It is found in the cytoplasm. The enzyme catalyses malonyl-[ACP] + acetyl-CoA + H(+) = 3-oxobutanoyl-[ACP] + CO2 + CoA. It functions in the pathway lipid metabolism; fatty acid biosynthesis. In terms of biological role, catalyzes the condensation reaction of fatty acid synthesis by the addition to an acyl acceptor of two carbons from malonyl-ACP. Catalyzes the first condensation reaction which initiates fatty acid synthesis and may therefore play a role in governing the total rate of fatty acid production. Possesses both acetoacetyl-ACP synthase and acetyl transacylase activities. Its substrate specificity determines the biosynthesis of branched-chain and/or straight-chain of fatty acids. The polypeptide is Beta-ketoacyl-[acyl-carrier-protein] synthase III 2 (Staphylococcus epidermidis (strain ATCC 12228 / FDA PCI 1200)).